The following is a 343-amino-acid chain: MIAELFTNNALNLVIIFGSCAALILMSFWFRRGNRKRKGFLFHAVQFLIYTIIISAVGSIINYVIENYKLKFITPGVIDFICTSLIAVILTIKLFLLINQFEKQQIKKGRDITSARIMSRIIKITIIVVLVLLYGEHFGMSLSGLLTFGGIGGLAVGMAGKDILSNFFSGIMLYFDRPFSIGDWIRSPDRNIEGTVAEIGWRITKITTFDNRPLYVPNSLFSSISVENPGRMTNRRITTTIGLRYEDAAKVGVIVEAVREMLKNHPAIDQRQTLLVYFNQFADSSLNIMVYCFTKTTVWAEWLAAQQDVYLKIIDIVQSHGADFAFPSQTLYMDNITPPEQGR.

Residues 1 to 9 (MIAELFTNN) are Periplasmic-facing. A helical transmembrane segment spans residues 10–30 (ALNLVIIFGSCAALILMSFWF). Topologically, residues 31-40 (RRGNRKRKGF) are cytoplasmic. The chain crosses the membrane as a helical span at residues 41 to 61 (LFHAVQFLIYTIIISAVGSII). The Periplasmic segment spans residues 62 to 77 (NYVIENYKLKFITPGV). Residues 78–98 (IDFICTSLIAVILTIKLFLLI) traverse the membrane as a helical segment. At 99 to 125 (NQFEKQQIKKGRDITSARIMSRIIKIT) the chain is on the cytoplasmic side. A helical transmembrane segment spans residues 126–146 (IIVVLVLLYGEHFGMSLSGLL). Residue Thr-147 is a topological domain, periplasmic. The chain crosses the membrane as a helical span at residues 148 to 168 (FGGIGGLAVGMAGKDILSNFF). At 169–343 (SGIMLYFDRP…DNITPPEQGR (175 aa)) the chain is on the cytoplasmic side.

Belongs to the MscS (TC 1.A.23) family. As to quaternary structure, homoheptamer.

The protein localises to the cell inner membrane. In terms of biological role, mechanosensitive channel that protects cells against hypoosmotic stress when highly overexpressed. In Escherichia coli (strain K12), this protein is Low conductance mechanosensitive channel YnaI (ynaI).